A 188-amino-acid chain; its full sequence is Large ribosomal subunit protein bL35m (188 aa).

Belongs to the bacterial ribosomal protein bL35 family. As to quaternary structure, component of the mitochondrial large ribosomal subunit (mt-LSU). Mature mammalian 55S mitochondrial ribosomes consist of a small (28S) and a large (39S) subunit. The 28S small subunit contains a 12S ribosomal RNA (12S mt-rRNA) and 30 different proteins. The 39S large subunit contains a 16S rRNA (16S mt-rRNA), a copy of mitochondrial valine transfer RNA (mt-tRNA(Val)), which plays an integral structural role, and 52 different proteins.

It localises to the mitochondrion. This Homo sapiens (Human) protein is Large ribosomal subunit protein bL35m (MRPL35).